Here is a 602-residue protein sequence, read N- to C-terminus: UvrABC system protein C (602 aa).

Residues 19-97 (EEPGVYRMIG…IKSLAPRYNI (79 aa)) enclose the GIY-YIG domain. A UVR domain is found at 206–241 (SEVIDDLTARMHAAAERLAFEEAAACRDQVRVLQAV).

Belongs to the UvrC family. In terms of assembly, interacts with UvrB in an incision complex.

The protein localises to the cytoplasm. The UvrABC repair system catalyzes the recognition and processing of DNA lesions. UvrC both incises the 5' and 3' sides of the lesion. The N-terminal half is responsible for the 3' incision and the C-terminal half is responsible for the 5' incision. In Aromatoleum aromaticum (strain DSM 19018 / LMG 30748 / EbN1) (Azoarcus sp. (strain EbN1)), this protein is UvrABC system protein C.